The primary structure comprises 255 residues: 14-3-3 protein epsilon (255 aa).

N-acetylmethionine is present on methionine 1. The residue at position 50 (lysine 50) is an N6-acetyllysine; alternate. A Glycyl lysine isopeptide (Lys-Gly) (interchain with G-Cter in SUMO2); alternate cross-link involves residue lysine 50. At serine 65 the chain carries Phosphoserine. 3 positions are modified to N6-acetyllysine: lysine 69, lysine 118, and lysine 123. At tyrosine 131 the chain carries Phosphotyrosine. Residue threonine 137 is modified to Phosphothreonine. Serine 210 is subject to Phosphoserine. At threonine 232 the chain carries Phosphothreonine. The tract at residues 234–255 (DMQGDGEEQNKEALQDVEDENQ) is disordered.

Belongs to the 14-3-3 family. In terms of assembly, homodimer. Heterodimerizes with YWHAZ. Interacts with PKA-phosphorylated AANAT. Interacts with ABL1 (phosphorylated form); the interaction retains it in the cytoplasm. Interacts with ARHGEF28. Interacts with BEX3. Weakly interacts with CDKN1B. Interacts with the 'Thr-369' phosphorylated form of DAPK2. Interacts with DENND1A. Interacts with GAB2. Interacts with phosphorylated GRB10. Interacts with KSR1. Interacts with NDEL1. Interacts with PI4KB, TBC1D22A and TBC1D22B. Interacts with the phosphorylated (by AKT1) form of SRPK2. Interacts with TIAM2. Interacts with the 'Ser-1134' and 'Ser-1161' phosphorylated form of SOS1. Interacts with ZFP36 (via phosphorylated form). Interacts with SLITRK1. Interacts with HSF1 (via phosphorylated form); this interaction promotes HSF1 sequestration in the cytoplasm in a ERK-dependent manner. Interacts with RIPOR2. Interacts with KLHL22; required for the nuclear localization of KLHL22 upon amino acid starvation. Interacts with CRTC1. Interacts with CRTC2 (probably when phosphorylated at 'Ser-171'). Interacts with CRTC3 (probably when phosphorylated at 'Ser-162' and/or 'Ser-273'). Interacts with ATP2B1 and ATP2B3; this interaction inhibits calcium-transporting ATPase activity. Interacts with MEFV. Interacts with RNF115. Interacts with GPR15; this interaction promotes ER-to-Golgi transport of GPR15.

The protein localises to the nucleus. The protein resides in the cytoplasm. It is found in the melanosome. Its function is as follows. Adapter protein implicated in the regulation of a large spectrum of both general and specialized signaling pathways. Binds to a large number of partners, usually by recognition of a phosphoserine or phosphothreonine motif. Binding generally results in the modulation of the activity of the binding partner. Positively regulates phosphorylated protein HSF1 nuclear export to the cytoplasm. The chain is 14-3-3 protein epsilon (Ywhae) from Rattus norvegicus (Rat).